The sequence spans 432 residues: D-amino acid dehydrogenase (432 aa).

3–17 (VVILGSGVVGVTSAW) contacts FAD.

It belongs to the DadA oxidoreductase family. The cofactor is FAD.

It catalyses the reaction a D-alpha-amino acid + A + H2O = a 2-oxocarboxylate + AH2 + NH4(+). The protein operates within amino-acid degradation; D-alanine degradation; NH(3) and pyruvate from D-alanine: step 1/1. In terms of biological role, oxidative deamination of D-amino acids. This chain is D-amino acid dehydrogenase, found in Salmonella agona (strain SL483).